A 756-amino-acid chain; its full sequence is Protein psiP (756 aa).

The signal sequence occupies residues Met-1–Gly-23. At Gln-24 to Thr-692 the chain is on the extracellular side. An N-linked (GlcNAc...) asparagine glycan is attached at Asn-82. Positions Leu-126 to Asp-281 constitute a PA14 domain. Residues Asn-359, Asn-483, Asn-564, and Asn-663 are each glycosylated (N-linked (GlcNAc...) asparagine). A helical membrane pass occupies residues Ala-693–Gly-713. Topologically, residues Lys-714–Asn-756 are cytoplasmic. Polar residues predominate over residues Ser-730–Arg-744. Positions Ser-730–Asn-756 are disordered.

The protein belongs to the prespore-cell-inducing factor family.

The protein resides in the membrane. The sequence is that of Protein psiP (psiP) from Dictyostelium discoideum (Social amoeba).